The primary structure comprises 360 residues: Ferredoxin--NADP reductase (360 aa).

Residues Thr25, Glu44, Gln52, Tyr57, Val97, Phe132, Asp298, and Ser339 each contribute to the FAD site.

This sequence belongs to the ferredoxin--NADP reductase type 2 family. In terms of assembly, homodimer. It depends on FAD as a cofactor.

It carries out the reaction 2 reduced [2Fe-2S]-[ferredoxin] + NADP(+) + H(+) = 2 oxidized [2Fe-2S]-[ferredoxin] + NADPH. The sequence is that of Ferredoxin--NADP reductase from Chlorobaculum tepidum (strain ATCC 49652 / DSM 12025 / NBRC 103806 / TLS) (Chlorobium tepidum).